A 140-amino-acid chain; its full sequence is Profilin (140 aa).

S2 bears the N-acetylserine mark.

It belongs to the profilin family. In terms of assembly, occurs in many kinds of cells as a complex with monomeric actin in a 1:1 ratio.

Its subcellular location is the cytoplasm. The protein localises to the cytoskeleton. Its function is as follows. Binds to actin and affects the structure of the cytoskeleton. At high concentrations, profilin prevents the polymerization of actin, whereas it enhances it at low concentrations. By binding to PIP2, it inhibits the formation of IP3 and DG. In Clypeaster japonicus (Sand dollar), this protein is Profilin.